Here is a 390-residue protein sequence, read N- to C-terminus: Digeranylgeranylglycerophospholipid reductase (390 aa).

FAD is bound by residues Ala-18, Glu-37, Cys-48, Ala-49, Ala-51, Arg-98, Val-122, Asp-278, Gly-290, and Ile-291. Val-368 is an a 2,3-bis-O-(geranylgeranyl)-sn-glycerol 1-phospholipid binding site.

Belongs to the geranylgeranyl reductase family. DGGGPL reductase subfamily. It depends on FAD as a cofactor.

It carries out the reaction a 2,3-bis-O-phytanyl-sn-glycerol 1-phospholipid + 8 A = a 2,3-bis-O-(geranylgeranyl)-sn-glycerol 1-phospholipid + 8 AH2. The catalysed reaction is 2,3-bis-O-(phytanyl)-sn-glycerol 1-phosphate + 8 A = 2,3-bis-O-(geranylgeranyl)-sn-glycerol 1-phosphate + 8 AH2. It catalyses the reaction CDP-2,3-bis-O-(geranylgeranyl)-sn-glycerol + 8 AH2 = CDP-2,3-bis-O-(phytanyl)-sn-glycerol + 8 A. The enzyme catalyses archaetidylserine + 8 AH2 = 2,3-bis-O-phytanyl-sn-glycero-3-phospho-L-serine + 8 A. It functions in the pathway membrane lipid metabolism; glycerophospholipid metabolism. Functionally, is involved in the reduction of 2,3-digeranylgeranylglycerophospholipids (unsaturated archaeols) into 2,3-diphytanylglycerophospholipids (saturated archaeols) in the biosynthesis of archaeal membrane lipids. Catalyzes the formation of archaetidic acid (2,3-di-O-phytanyl-sn-glyceryl phosphate) from 2,3-di-O-geranylgeranylglyceryl phosphate (DGGGP) via the hydrogenation of each double bond of the isoprenoid chains. Is also probably able to reduce double bonds of geranyl groups in CDP-2,3-bis-O-(geranylgeranyl)-sn-glycerol and archaetidylserine, thus acting at various stages in the biosynthesis of archaeal membrane lipids. The protein is Digeranylgeranylglycerophospholipid reductase of Methanococcus maripaludis (strain C7 / ATCC BAA-1331).